The sequence spans 205 residues: Putative 3-methyladenine DNA glycosylase (205 aa).

The protein belongs to the DNA glycosylase MPG family.

In Mycolicibacterium paratuberculosis (strain ATCC BAA-968 / K-10) (Mycobacterium paratuberculosis), this protein is Putative 3-methyladenine DNA glycosylase.